The following is a 272-amino-acid chain: Phosphonates import ATP-binding protein PhnC (272 aa).

Positions 2 to 244 constitute an ABC transporter domain; the sequence is LVFDKVNRVY…IQKRLYEIEH (243 aa). Residue 35-42 coordinates ATP; the sequence is GPSGAGKS.

The protein belongs to the ABC transporter superfamily. Phosphonates importer (TC 3.A.1.9.1) family. In terms of assembly, the complex is composed of two ATP-binding proteins (PhnC), two transmembrane proteins (PhnE) and a solute-binding protein (PhnD).

It is found in the cell inner membrane. The enzyme catalyses phosphonate(out) + ATP + H2O = phosphonate(in) + ADP + phosphate + H(+). Functionally, part of the ABC transporter complex PhnCDE involved in phosphonates import. Responsible for energy coupling to the transport system. The chain is Phosphonates import ATP-binding protein PhnC from Hydrogenovibrio crunogenus (strain DSM 25203 / XCL-2) (Thiomicrospira crunogena).